We begin with the raw amino-acid sequence, 266 residues long: L-cystine-binding protein TcyJ (266 aa).

The signal sequence occupies residues 1-29 (MKLAHLGRQALMGVMAVALVAGMSVKSFA).

It belongs to the bacterial solute-binding protein 3 family. In terms of assembly, the complex is composed of two ATP-binding proteins (TcyN), two transmembrane proteins (TcyL) and a solute-binding protein (TcyJ).

It localises to the periplasm. Part of the ABC transporter complex TcyJLN involved in L-cystine import. Binds cystine. The protein is L-cystine-binding protein TcyJ of Escherichia coli O6:H1 (strain CFT073 / ATCC 700928 / UPEC).